We begin with the raw amino-acid sequence, 220 residues long: CRIB domain-containing protein RIC3 (220 aa).

In terms of domain architecture, CRIB spans Ile-28–Gly-41. The segment at His-39–Glu-220 is disordered. Polar residues predominate over residues Asn-61–Ile-77. A compositionally biased stretch (low complexity) spans Asn-108–Ser-121. Composition is skewed to basic residues over residues Asn-127–His-136 and His-172–Lys-184. Residues Asp-209 to Glu-220 show a composition bias toward polar residues.

In terms of assembly, interacts with ARAC11/ROP1. As to expression, expressed in flowers and pollen.

It localises to the cytoplasm. Functions as a downstream effector of Rho-related GTP binding proteins of the 'Rho of Plants' (ROPs) family. Participates in the propagation of ROP GTPase signals in specific cellular responses. Functions as a downstream effector of ARAC11/ROP1 to activate calcium signaling that leads to F-actin disassembly associated with exocytosis in the tip of the growing pollen tube. Counteracts the ARAC11/ROP1-RIC4 pathway, which promotes apical F-actin assembly associated with vesicle accumulation, to control actin dynamics and pollen tube apical growth. The polypeptide is CRIB domain-containing protein RIC3 (RIC3) (Arabidopsis thaliana (Mouse-ear cress)).